The primary structure comprises 217 residues: Probable disulfide bond formation protein D (217 aa).

The first 28 residues, 1-28, serve as a signal peptide directing secretion; that stretch reads MKSSNKLMALGIVFSIAVLIVIGTIVYS. The cysteines at positions 66 and 69 are disulfide-linked.

This sequence belongs to the thioredoxin family. DsbA subfamily.

Functionally, may be required for disulfide bond formation in some proteins. This is Probable disulfide bond formation protein D (bdbD) from Bacillus anthracis.